The following is a 264-amino-acid chain: MTMEILLVNDDGIYSNGLLALKNVISEEFDANVTVVAPTNQQSGIGRAISLFEPLRITKTKLADCSEGYAVSGTPTDCVVLGVHQVLKKVPDYVISGINIGENLGTELTTSGTLGAAFEGAHHGAKALACSLQVTTDHLKFKEGESPIDFMTTARIVRNVFKKFLDDEFPCDVININVPDNATENTPVEITKLARKMYSMHVEERIDPRSRSYYWLDGYPIMDEEDGTDVYAVRNKRNVSVTPLTLDNTAKNLDEFREKYAKKF.

A divalent metal cation-binding residues include aspartate 10, aspartate 11, serine 43, and asparagine 99.

The protein belongs to the SurE nucleotidase family. The cofactor is a divalent metal cation.

Its subcellular location is the cytoplasm. It carries out the reaction a ribonucleoside 5'-phosphate + H2O = a ribonucleoside + phosphate. Functionally, nucleotidase that shows phosphatase activity on nucleoside 5'-monophosphates. This Methanococcus maripaludis (strain C6 / ATCC BAA-1332) protein is 5'-nucleotidase SurE.